A 183-amino-acid chain; its full sequence is Oleosin-B2 (183 aa).

Positions 1–23 (QASIFSRFFRMFSFIFPFVNVIK) are polar. 3 consecutive transmembrane segments (helical) span residues 24–44 (LIIA…ALGG), 46–66 (AVAL…LVPA), and 72–92 (LLAS…GLIM). A hydrophobic region spans residues 24 to 95 (LIIASVTSLV…TGIGLIMGLV (72 aa)).

The protein belongs to the oleosin family. The full-length protein is found in the tapetal lipid bodies of immature anthers, the proteolytically cleaved C-terminal product is found on the coats of pollen grains. Not present in seeds.

The protein resides in the lipid droplet. The protein localises to the membrane. Many of the major pollen coat proteins are derived from endoproteolytic cleavage of oleosin-like proteins. In Brassica napus (Rape), this protein is Oleosin-B2 (OlnB2).